A 291-amino-acid polypeptide reads, in one-letter code: Kidney mitochondrial carrier protein 1 (291 aa).

Solcar repeat units follow at residues 7–96 (KPFI…LKRL), 104–189 (ETLV…TKKH), and 198–289 (DTVY…LKKL). 6 helical membrane-spanning segments follow: residues 9 to 26 (FIYG…TFPI), 71 to 89 (GIAP…KIGT), 106 to 124 (LVLN…SCIA), 164 to 183 (GVSL…LPVY), 204 to 224 (FLSS…VDVV), and 264 to 283 (GFWP…FITY).

It belongs to the mitochondrial carrier (TC 2.A.29) family.

It localises to the mitochondrion inner membrane. It catalyses the reaction sulfite(in) + sulfate(out) = sulfite(out) + sulfate(in). The catalysed reaction is thiosulfate(in) + sulfate(out) = thiosulfate(out) + sulfate(in). It carries out the reaction sulfate(out) + phosphate(in) = sulfate(in) + phosphate(out). The enzyme catalyses oxalate(in) + sulfate(out) = oxalate(out) + sulfate(in). It catalyses the reaction malonate(in) + sulfate(out) = malonate(out) + sulfate(in). The catalysed reaction is maleate(in) + sulfate(out) = maleate(out) + sulfate(in). It carries out the reaction (S)-malate(in) + sulfate(out) = (S)-malate(out) + sulfate(in). The enzyme catalyses (3S)-citramalate(in) + sulfate(out) = (3S)-citramalate(out) + sulfate(in). It catalyses the reaction (3R)-citramalate(in) + sulfate(out) = (3R)-citramalate(out) + sulfate(in). The catalysed reaction is sulfate(out) + succinate(in) = sulfate(in) + succinate(out). It carries out the reaction (S,S)-tartrate(in) + sulfate(out) = (S,S)-tartrate(out) + sulfate(in). The enzyme catalyses (2R,3R)-tartrate(in) + sulfate(out) = (2R,3R)-tartrate(out) + sulfate(in). It catalyses the reaction D-aspartate(in) + sulfate(out) = D-aspartate(out) + sulfate(in). The catalysed reaction is L-aspartate(in) + sulfate(out) = L-aspartate(out) + sulfate(in). It carries out the reaction sulfate(in) = sulfate(out). The enzyme catalyses phosphate(in) = phosphate(out). It catalyses the reaction (S)-malate(out) = (S)-malate(in). Functionally, probable transporter. Antiporter that transports inorganic anions (sulfate, sulfite, thiosulfate and phosphate) and, to a lesser extent, a variety of dicarboxylates (e.g. malonate, malate and citramalate) and, even more so, aspartate. The sulfate/sulfate exchange is much higher than the phosphate/phosphate and malate/malate exchanges. The transport affinities is higher for sulfate and thiosulfate than for any other substrate. May catalyze the export of sulfite and thiosulfate (the hydrogen sulfide degradation products) from the mitochondria, thereby modulating the level of the hydrogen sulfide. Also may mediate a very low unidirectional transport of sulfate, phosphate and (S)-malate. The protein is Kidney mitochondrial carrier protein 1 of Xenopus laevis (African clawed frog).